The sequence spans 320 residues: o-succinylbenzoate synthase (320 aa).

Catalysis depends on lysine 133, which acts as the Proton donor. Residues aspartate 161, glutamate 190, and aspartate 213 each coordinate Mg(2+). The active-site Proton acceptor is the lysine 235.

It belongs to the mandelate racemase/muconate lactonizing enzyme family. MenC type 1 subfamily. It depends on a divalent metal cation as a cofactor.

It carries out the reaction (1R,6R)-6-hydroxy-2-succinyl-cyclohexa-2,4-diene-1-carboxylate = 2-succinylbenzoate + H2O. The protein operates within quinol/quinone metabolism; 1,4-dihydroxy-2-naphthoate biosynthesis; 1,4-dihydroxy-2-naphthoate from chorismate: step 4/7. It functions in the pathway quinol/quinone metabolism; menaquinone biosynthesis. Its function is as follows. Converts 2-succinyl-6-hydroxy-2,4-cyclohexadiene-1-carboxylate (SHCHC) to 2-succinylbenzoate (OSB). This Shigella sonnei (strain Ss046) protein is o-succinylbenzoate synthase.